The chain runs to 285 residues: Non-structural protein 3c (285 aa).

This Bat coronavirus 133/2005 (BtCoV) protein is Non-structural protein 3c.